Reading from the N-terminus, the 428-residue chain is Probable dual-specificity RNA methyltransferase RlmN 2 (428 aa).

The active-site Proton acceptor is glutamate 142. The region spanning 148-414 (FAGRATACVS…STVRQRRGID (267 aa)) is the Radical SAM core domain. A disulfide bridge connects residues cysteine 155 and cysteine 419. Cysteine 162, cysteine 166, and cysteine 169 together coordinate [4Fe-4S] cluster. Residues 207-228 (MRDPSPGREAGEKSRDEADRHR) are compositionally biased toward basic and acidic residues. A disordered region spans residues 207–232 (MRDPSPGREAGEKSRDEADRHRAPPT). S-adenosyl-L-methionine is bound by residues 244 to 245 (GE), serine 276, 299 to 301 (SLH), and asparagine 375. Cysteine 419 serves as the catalytic S-methylcysteine intermediate.

The protein belongs to the radical SAM superfamily. RlmN family. The cofactor is [4Fe-4S] cluster.

Its subcellular location is the cytoplasm. It carries out the reaction adenosine(2503) in 23S rRNA + 2 reduced [2Fe-2S]-[ferredoxin] + 2 S-adenosyl-L-methionine = 2-methyladenosine(2503) in 23S rRNA + 5'-deoxyadenosine + L-methionine + 2 oxidized [2Fe-2S]-[ferredoxin] + S-adenosyl-L-homocysteine. It catalyses the reaction adenosine(37) in tRNA + 2 reduced [2Fe-2S]-[ferredoxin] + 2 S-adenosyl-L-methionine = 2-methyladenosine(37) in tRNA + 5'-deoxyadenosine + L-methionine + 2 oxidized [2Fe-2S]-[ferredoxin] + S-adenosyl-L-homocysteine. Functionally, specifically methylates position 2 of adenine 2503 in 23S rRNA and position 2 of adenine 37 in tRNAs. The sequence is that of Probable dual-specificity RNA methyltransferase RlmN 2 from Opitutus terrae (strain DSM 11246 / JCM 15787 / PB90-1).